The following is a 136-amino-acid chain: Glutaredoxin-C8 (136 aa).

The region spanning 33-135 is the Glutaredoxin domain; that stretch reads SSFVKSTVKA…KLLNIDVKED (103 aa). Cys-53 and Cys-56 form a disulfide bridge.

It belongs to the glutaredoxin family. CPYC subfamily.

It localises to the cytoplasm. Functionally, has a glutathione-disulfide oxidoreductase activity in the presence of NADPH and glutathione reductase. Reduces low molecular weight disulfides and proteins. The protein is Glutaredoxin-C8 (GRXC8) of Oryza sativa subsp. japonica (Rice).